Here is a 513-residue protein sequence, read N- to C-terminus: Alpha-1B-glycoprotein (513 aa).

Positions 1-20 (MSLLTTVLLLWGFTLGPGNA) are cleaved as a signal peptide. Ig-like V-type domains lie at 22 to 126 (WLDS…VTGK), 127 to 219 (EPLP…MSAT), 220 to 312 (QLPP…PVEL), 313 to 415 (MWSD…LRIN), and 416 to 513 (GPAP…VEGS). Residues Asn-44, Asn-89, and Asn-192 are each glycosylated (N-linked (GlcNAc...) asparagine). 5 disulfide bridges follow: Cys-49–Cys-96, Cys-153–Cys-195, Cys-245–Cys-292, Cys-343–Cys-392, and Cys-441–Cys-488. 4 N-linked (GlcNAc...) asparagine glycosylation sites follow: Asn-369, Asn-381, Asn-389, and Asn-485.

In terms of assembly, interacts with CRISP3. In terms of tissue distribution, isoform 1 is expressed in normal liver. Isoform 2 is expressed in the regenerating liver after partial hepatectomy and at very low levels in the normal lung, brain and testis.

Its subcellular location is the secreted. The protein is Alpha-1B-glycoprotein of Rattus norvegicus (Rat).